A 1006-amino-acid polypeptide reads, in one-letter code: MDVRCINWFESHGENRFLYLKSRCRNGETVFIRFPHYFYYVVTDEIYQSLSPPPFNARPLGKMRTIDIDETISYNLDIKDRKCSVADMWLIEEPKKRSIQNATMDEFLNISWFYISNGISPDGCYSLDEQYLTKINNGCYHCDDPRNCFAKKIPRFDIPRSYLFLDIECHFDKKFPSVFINPISHTSYCYIDLSGKRLLFTLINEEMLTEQEIQEAVDRGCLRIQSLMEMDYERELVLCSEIVLLRIAKQLLELTFDYVVTFNGHNFDLRYITNRLELLTGEKIIFRSPDKKEAVHLCIYERNQSSHKGVGGMANTTFHVNNNNGTIFFDLYSFIQKSEKLDSYKLDSISKNAFSCMGKVLNRGVREMTFIGDDTTDAKGKAAAFAKVLTTGNYVTVDEDIICKVIRKDIWENGFKVVLLCPTLPNDTYKLSFGKDDVDLAQMYKDYNLNIALDMARYCIHDACLCQYLWEYYGVETKTDAGASTYVLPQSMVFEYRASTVIKGPLLKLLLETKTILVRSETKQKFPYEGGKVFAPKQKMFSNNVLIFDYNSLYPNVCIFGNLSPETLVGVVVSTNRLEEEINNQLLLQKYPPPRYITVHCEPRLPNLISEIAIFDRSIEGTIPRLLRTFLAERARYKKMLKQATSSTEKAIYDSMQYTYKIVANSVYGLMGFRNSALYSYASAKSCTSIGRRMILYLESVLNGAELSNGMLRFANPLSNPFYMDDRDINPIVKTSLPIDYRFRFRSVYGDTDSVFTEIDSQDVDKSIEIAKELERLINNRVLFNNFKIEFEAVYKNLIMQSKKKYTTMKYSASSNSKSVPERINKGTSETRRDVSKFHKNMIKTYKTRLSEMLSEGRMNSNQVCIDILRSLETDLRSEFDSRSSPLELFMLSRMHHSNYKSADNPNMYLVTEYNKNNPETIELGERYYFAYICPANVPWTKKLVNIKTYETIIDRSFKLGSDQRIFYEVYFKRLTSEIVNLLDNKVLCISFFERMFGSKPTFYEA.

The protein belongs to the DNA polymerase type-B family. Interacts with OPG148. Component of the Uracil-DNA glycosylase(UDG)-OPG148-polymerase complex; OPG148 and OPG116/UDG form a heterodimeric processivity factor that associates with OPG071 to form the processive polymerase holoenzyme.

It catalyses the reaction DNA(n) + a 2'-deoxyribonucleoside 5'-triphosphate = DNA(n+1) + diphosphate. Functionally, catalyzes DNA synthesis. Acquires processivity by associating with a heterodimeric processivity factor comprised of the viral OPG148 and OPG116 proteins, thereby forming the DNA polymerase holoenzyme. Displays 3'- to 5' exonuclease activity. Might participate in viral DNA recombination. Does not perform OPG116/D4synthesis across an abasic site. The sequence is that of DNA polymerase (OPG071) from Homo sapiens (Human).